The following is a 682-amino-acid chain: Potassium-transporting ATPase ATP-binding subunit (682 aa).

4 consecutive transmembrane segments (helical) span residues Pro34 to Ala54, Ala62 to Ala82, Ile219 to Leu239, and Val254 to Ile274. Residue Asp307 is the 4-aspartylphosphate intermediate of the active site. ATP-binding positions include Asp344, Glu348, Phe377 to Ser384, and Lys395. Mg(2+)-binding residues include Asp518 and Asp522. Transmembrane regions (helical) follow at residues Phe588–Met608, Ala616–Leu636, and Ile656–Leu676.

The protein belongs to the cation transport ATPase (P-type) (TC 3.A.3) family. Type IA subfamily. In terms of assembly, the system is composed of three essential subunits: KdpA, KdpB and KdpC.

It is found in the cell inner membrane. It carries out the reaction K(+)(out) + ATP + H2O = K(+)(in) + ADP + phosphate + H(+). Functionally, part of the high-affinity ATP-driven potassium transport (or Kdp) system, which catalyzes the hydrolysis of ATP coupled with the electrogenic transport of potassium into the cytoplasm. This subunit is responsible for energy coupling to the transport system and for the release of the potassium ions to the cytoplasm. The protein is Potassium-transporting ATPase ATP-binding subunit of Escherichia coli O17:K52:H18 (strain UMN026 / ExPEC).